Consider the following 423-residue polypeptide: Polyglutamylase complex subunit TTLL1 (423 aa).

In terms of domain architecture, TTL spans methionine 1–asparagine 367. ATP is bound by residues lysine 138, glutamine 144–glycine 145, serine 181–isoleucine 184, and lysine 194–aspartate 196. Glutamine 144 lines the a protein pocket. L-glutamate is bound at residue arginine 220. Threonine 241–asparagine 242 contributes to the ATP binding site. An L-glutamate-binding site is contributed by lysine 259. Mg(2+) is bound by residues aspartate 313, glutamate 326, and asparagine 328. Lysine 344 serves as a coordination point for L-glutamate. Residues glycine 391–lysine 423 form a disordered region.

The protein belongs to the tubulin polyglutamylase family. Part of the neuronal tubulin polyglutamylase complex which contains TPGS1, TPGS2, TTLL1, LRRC49 and NICN1. Interacts with PCM1, CSTPP1 and LRRC49. Requires Mg(2+) as cofactor.

The protein resides in the cytoplasm. The protein localises to the cytoskeleton. It localises to the cilium basal body. It is found in the cilium axoneme. Its subcellular location is the cell projection. The protein resides in the cilium. The protein localises to the flagellum. It carries out the reaction (L-glutamyl)(n)-gamma-L-glutamyl-L-glutamyl-[protein] + L-glutamate + ATP = (L-glutamyl)(n+1)-gamma-L-glutamyl-L-glutamyl-[protein] + ADP + phosphate + H(+). Functionally, catalytic subunit of a polyglutamylase complex which modifies tubulin, generating side chains of glutamate on the gamma-carboxyl group of specific glutamate residues within the C-terminal tail of tubulin. Probably involved in the side-chain elongation step of the polyglutamylation reaction rather than the initiation step. Modifies both alpha- and beta-tubulins with a preference for the alpha-tail. Unlike most polyglutamylases of the tubulin--tyrosine ligase family, only displays a catalytic activity when in complex with other proteins as it is most likely lacking domains important for autonomous activity. Part of the neuronal tubulin polyglutamylase complex. Mediates cilia and flagella polyglutamylation which is essential for their biogenesis and motility. Involved in respiratory motile cilia function through the regulation of beating asymmetry. Essential for sperm flagella biogenesis, motility and male fertility. Involved in KLF4 glutamylation which impedes its ubiquitination, thereby leading to somatic cell reprogramming, pluripotency maintenance and embryogenesis. This is Polyglutamylase complex subunit TTLL1 (TTLL1) from Bos taurus (Bovine).